Here is a 173-residue protein sequence, read N- to C-terminus: MSGRVRPIVVLVGPPGSGKTTIGRRLANALNTSVVDSDVLIEQLQGKPCGVVFAELGEPNFRDLEAEVIDFALTTAGVVSLGGGAVTTESVRQKLRAQIVVWVDVSAAEGVRRTAVENSRPLLDTTNPLERYSELLAQRRDFYKEVADYRAHTDGRSPQQIVADILGFLETLR.

16 to 21 (GSGKTT) contacts ATP. Residue Thr-20 coordinates Mg(2+). The substrate site is built by Asp-38, Arg-62, and Gly-83. Arg-120 contacts ATP. Arg-139 contributes to the substrate binding site. Arg-156 serves as a coordination point for ATP.

It belongs to the shikimate kinase family. Monomer. The cofactor is Mg(2+).

It localises to the cytoplasm. It catalyses the reaction shikimate + ATP = 3-phosphoshikimate + ADP + H(+). It functions in the pathway metabolic intermediate biosynthesis; chorismate biosynthesis; chorismate from D-erythrose 4-phosphate and phosphoenolpyruvate: step 5/7. Functionally, catalyzes the specific phosphorylation of the 3-hydroxyl group of shikimic acid using ATP as a cosubstrate. The sequence is that of Shikimate kinase from Corynebacterium diphtheriae (strain ATCC 700971 / NCTC 13129 / Biotype gravis).